The chain runs to 321 residues: GTP 3',8-cyclase (321 aa).

One can recognise a Radical SAM core domain in the interval 5–233 (SFNRVIDYIR…QGSSKIYTLE (229 aa)). Arg-14 serves as a coordination point for GTP. Positions 21 and 25 each coordinate [4Fe-4S] cluster. Position 27 (Tyr-27) interacts with S-adenosyl-L-methionine. Cys-28 lines the [4Fe-4S] cluster pocket. GTP is bound at residue Arg-64. Gly-68 provides a ligand contact to S-adenosyl-L-methionine. Ser-95 contributes to the GTP binding site. Ser-119 is a binding site for S-adenosyl-L-methionine. Lys-155 is a GTP binding site. Met-189 contacts S-adenosyl-L-methionine. Residues Cys-249 and Cys-252 each coordinate [4Fe-4S] cluster. GTP is bound at residue 254–256 (RIR). Cys-266 is a [4Fe-4S] cluster binding site.

This sequence belongs to the radical SAM superfamily. MoaA family. Monomer and homodimer. [4Fe-4S] cluster is required as a cofactor.

The enzyme catalyses GTP + AH2 + S-adenosyl-L-methionine = (8S)-3',8-cyclo-7,8-dihydroguanosine 5'-triphosphate + 5'-deoxyadenosine + L-methionine + A + H(+). The protein operates within cofactor biosynthesis; molybdopterin biosynthesis. Its function is as follows. Catalyzes the cyclization of GTP to (8S)-3',8-cyclo-7,8-dihydroguanosine 5'-triphosphate. The chain is GTP 3',8-cyclase from Helicobacter pylori (strain ATCC 700392 / 26695) (Campylobacter pylori).